The following is a 993-amino-acid chain: UPF0182 protein Sare_4110 (993 aa).

7 consecutive transmembrane segments (helical) span residues 18–38 (IGVL…VQAW), 61–81 (LLLF…NLWL), 110–130 (LGTW…LSAQ), 171–191 (GVAF…HYVF), 209–229 (AHLS…YVLD), 260–280 (ILAY…NAWM), and 283–303 (LVWP…IGGI). Disordered regions lie at residues 892–937 (QGEK…ADAA) and 974–993 (EQAA…SPGG). The span at 900–929 (STPPPSGETPAPTPTPTPTPSSPSVTPPPV) shows a compositional bias: pro residues. The segment covering 976-993 (AAGPGSAATPTGSPSPGG) has biased composition (low complexity).

It belongs to the UPF0182 family.

The protein resides in the cell membrane. The protein is UPF0182 protein Sare_4110 of Salinispora arenicola (strain CNS-205).